The chain runs to 197 residues: Rac-like GTP-binding protein ARAC1 (197 aa).

13 to 20 (GDGAVGKT) is a binding site for GTP. The short motif at 35 to 43 (YVPTVFDNF) is the Effector region element. Residues 60–64 (DTAGQ) and 118–121 (TKLD) each bind GTP. Cys-194 is modified (cysteine methyl ester). The S-geranylgeranyl cysteine moiety is linked to residue Cys-194. A propeptide spans 195–197 (SIL) (removed in mature form).

Belongs to the small GTPase superfamily. Rho family. As to quaternary structure, interacts with SPK1. As to expression, ubiquitous.

Its subcellular location is the cytoplasm. The protein localises to the membrane. Its function is as follows. Inactive GDP-bound Rho GTPases reside in the cytosol, are found in a complex with Rho GDP-dissociation inhibitors (Rho GDIs), and are released from the GDI protein in order to translocate to membranes upon activation. The sequence is that of Rac-like GTP-binding protein ARAC1 (ARAC1) from Arabidopsis thaliana (Mouse-ear cress).